Here is a 156-residue protein sequence, read N- to C-terminus: 6,7-dimethyl-8-ribityllumazine synthase (156 aa).

5-amino-6-(D-ribitylamino)uracil-binding positions include Phe-22, 57–59, and 81–83; these read AVE and CVI. 86–87 provides a ligand contact to (2S)-2-hydroxy-3-oxobutyl phosphate; it reads GT. His-89 functions as the Proton donor in the catalytic mechanism. Phe-114 lines the 5-amino-6-(D-ribitylamino)uracil pocket. Position 128 (Arg-128) interacts with (2S)-2-hydroxy-3-oxobutyl phosphate.

This sequence belongs to the DMRL synthase family. Forms an icosahedral capsid composed of 60 subunits, arranged as a dodecamer of pentamers.

It carries out the reaction (2S)-2-hydroxy-3-oxobutyl phosphate + 5-amino-6-(D-ribitylamino)uracil = 6,7-dimethyl-8-(1-D-ribityl)lumazine + phosphate + 2 H2O + H(+). It participates in cofactor biosynthesis; riboflavin biosynthesis; riboflavin from 2-hydroxy-3-oxobutyl phosphate and 5-amino-6-(D-ribitylamino)uracil: step 1/2. In terms of biological role, catalyzes the formation of 6,7-dimethyl-8-ribityllumazine by condensation of 5-amino-6-(D-ribitylamino)uracil with 3,4-dihydroxy-2-butanone 4-phosphate. This is the penultimate step in the biosynthesis of riboflavin. This Tolumonas auensis (strain DSM 9187 / NBRC 110442 / TA 4) protein is 6,7-dimethyl-8-ribityllumazine synthase.